Consider the following 569-residue polypeptide: 63 kDa chaperonin, mitochondrial (569 aa).

Residues 1–29 constitute a mitochondrion transit peptide; it reads MFKMYRSPHITRNSFKYLKATNINSCRFY.

The protein belongs to the chaperonin (HSP60) family. In terms of assembly, forms a single seven-member ring complex, in tight association with the p60 protein. As to expression, testis.

It localises to the mitochondrion. Implicated in mitochondrial protein import and macromolecular assembly. May facilitate the correct folding of imported proteins. May also prevent misfolding and promote the refolding and proper assembly of unfolded polypeptides generated under stress conditions in the mitochondrial matrix. In Heliothis virescens (Tobacco budworm moth), this protein is 63 kDa chaperonin, mitochondrial.